The sequence spans 312 residues: MVGLKPSDVPPTMAVKFLGAGTAACFADLVTFPLDTAKVRLQIQGENQAVQTARLVQYRGVLGTILTMVRTEGPCSPYNGLVAGLQRQMSFASIRIGLYDSVKQVYTPKGADNSSLTTRILAGCTTGAMAVTCAQPTDVVKVRFQASIHLGPSRSDRKYSGTMDAYRTIAREEGVRGLWKGTLPNIMRNAIVNCAEVVTYDILKEKLLDYHLLTDNFPCHFVSAFGAGFCATVVASPVDVVKTRYMNSPPGQYFSPLDCMIKMVAQEGPTAFYKGFTPSFLRLGSWNVVMFVTYEQLKRALMKVQMLRESPF.

Residues 1 to 10 (MVGLKPSDVP) lie on the Mitochondrial intermembrane side of the membrane. A helical transmembrane segment spans residues 11–32 (PTMAVKFLGAGTAACFADLVTF). Solcar repeat units follow at residues 11–105 (PTMA…VKQV), 114–206 (SSLT…LKEK), and 215–300 (DNFP…LKRA). Over 33 to 76 (PLDTAKVRLQIQGENQAVQTARLVQYRGVLGTILTMVRTEGPCS) the chain is Mitochondrial matrix. A helical transmembrane segment spans residues 77–99 (PYNGLVAGLQRQMSFASIRIGLY). Over 100 to 119 (DSVKQVYTPKGADNSSLTTR) the chain is Mitochondrial intermembrane. Residues 120 to 136 (ILAGCTTGAMAVTCAQP) traverse the membrane as a helical segment. Topologically, residues 137 to 183 (TDVVKVRFQASIHLGPSRSDRKYSGTMDAYRTIAREEGVRGLWKGTL) are mitochondrial matrix. The helical transmembrane segment at 184–200 (PNIMRNAIVNCAEVVTY) threads the bilayer. Over 201 to 217 (DILKEKLLDYHLLTDNF) the chain is Mitochondrial intermembrane. A helical membrane pass occupies residues 218-237 (PCHFVSAFGAGFCATVVASP). The Mitochondrial matrix segment spans residues 238 to 271 (VDVVKTRYMNSPPGQYFSPLDCMIKMVAQEGPTA). The helical transmembrane segment at 272–294 (FYKGFTPSFLRLGSWNVVMFVTY) threads the bilayer. The purine nucleotide binding stretch occupies residues 279–301 (SFLRLGSWNVVMFVTYEQLKRAL). The Mitochondrial intermembrane segment spans residues 295–312 (EQLKRALMKVQMLRESPF).

This sequence belongs to the mitochondrial carrier (TC 2.A.29) family. In terms of assembly, interacts with HAX1; the interaction is direct and calcium-dependent. In terms of tissue distribution, only in skeletal muscle and heart. Also expressed in white and brown adipose tissues. Is more expressed in glycolytic than in oxidative skeletal muscles.

Its subcellular location is the mitochondrion inner membrane. The proton transporter activity is activated by fatty acids (in vitro). The proton transporter activity is inhibited by ATP and ADP (in vitro). The effect of Ubiquinone/coenzyme Q10 on the proton transporter activity in reconstituted membranes is unclear (in vitro). Functionally, putative transmembrane transporter that plays a role in mitochondrial metabolism via an as yet unclear mechanism. Originally, this mitochondrial protein was thought to act as a proton transmembrane transporter from the mitochondrial intermembrane space into the matrix, causing proton leaks through the inner mitochondrial membrane, thereby uncoupling mitochondrial membrane potential generation from ATP synthesis. However, this function is controversial and uncoupling may not be the function, or at least not the main function, but rather a consequence of more conventional metabolite transporter activity. The protein is Putative mitochondrial transporter UCP3 of Homo sapiens (Human).